The chain runs to 702 residues: EPRKFDPTFRGPVYNRGCTDVLCCVLFVIVILGYIALGTVAWIHGDPRKVIYPTDSTGQFCGQKGTPNAKKAILFYFNILKCASPAVLINLQCPTTQMCVSKCPDRFATYTDMQLLYRFNKSHWDYYKQFCKPGFNNPQKSVAQVLRDEDCPSMIVPSRPFLQRCFPDFITRNGTLTVANKTAFKDALDTARSVTELRDAANGITSIHEAKEVGMKIVEDYASCWYWIVIGLFIALVISLIFILLLRFTAGFLLWFIIFAVILLVAYGIWHCYWEFAVLRETPGADVTISDIGFQTDLHVYLQLSQTWLVFMVTLGLTEASIVLMLIFLRKRVRIAIALLREGSRAISYIMSALFYPIITFVLLAICISYWAMTALFLASSGDAVYKVASGNPNCKYANQTCSPESFNRTNITKQCPGAQCLFAFYGGESLYHRYIFILQLCNLLVFLWLVNFTIALGQCTVAGAFASYYWARRKPADIPPCPVFSSFSRALRYHTGSLAFGSLILAVVQLIRVILEYLDHKLKGAHNAFARFLLCCLKCCFWCLERFIRFMNRNAYIMIAIYGKNFCTSAREAFYLLMRNVVRVAVLDKVTDFLLFLGKLLIAGSVGVIAFFLFTRKIPIIQEEVPVLNYYCVPLLTVILGSYLIAHSFFSVYAMCVDTLFLCFCEDLERNDGTTAKPFFMSPGLKRILGKAEQSPKKSRG.

The helical transmembrane segment at 21–41 (VLCCVLFVIVILGYIALGTVA) threads the bilayer. Residues 42 to 225 (WIHGDPRKVI…KIVEDYASCW (184 aa)) are Extracellular-facing. N-linked (GlcNAc...) asparagine glycosylation is found at asparagine 120, asparagine 173, and asparagine 180. A helical membrane pass occupies residues 226 to 246 (YWIVIGLFIALVISLIFILLL). Over 247-249 (RFT) the chain is Cytoplasmic. Residues 250–270 (AGFLLWFIIFAVILLVAYGIW) form a helical membrane-spanning segment. The Extracellular portion of the chain corresponds to 271–308 (HCYWEFAVLRETPGADVTISDIGFQTDLHVYLQLSQTW). Residues 309 to 329 (LVFMVTLGLTEASIVLMLIFL) form a helical membrane-spanning segment. At 330–334 (RKRVR) the chain is on the cytoplasmic side. A helical membrane pass occupies residues 335 to 355 (IAIALLREGSRAISYIMSALF). The Extracellular portion of the chain corresponds to 356–357 (YP). Residues 358-378 (IITFVLLAICISYWAMTALFL) form a helical membrane-spanning segment. Topologically, residues 379–443 (ASSGDAVYKV…RYIFILQLCN (65 aa)) are cytoplasmic. A helical transmembrane segment spans residues 444 to 464 (LLVFLWLVNFTIALGQCTVAG). Over 465–498 (AFASYYWARRKPADIPPCPVFSSFSRALRYHTGS) the chain is Extracellular. A helical membrane pass occupies residues 499-519 (LAFGSLILAVVQLIRVILEYL). Residues 520 to 593 (DHKLKGAHNA…RVAVLDKVTD (74 aa)) are Cytoplasmic-facing. The chain crosses the membrane as a helical span at residues 594 to 614 (FLLFLGKLLIAGSVGVIAFFL). Residues 615-632 (FTRKIPIIQEEVPVLNYY) lie on the Extracellular side of the membrane. The chain crosses the membrane as a helical span at residues 633–653 (CVPLLTVILGSYLIAHSFFSV). At 654–699 (YAMCVDTLFLCFCEDLERNDGTTAKPFFMSPGLKRILGKAEQSPKK) the chain is on the cytoplasmic side.

It belongs to the CTL (choline transporter-like) family.

The protein resides in the cell membrane. The enzyme catalyses choline(out) + n H(+)(in) = choline(in) + n H(+)(out). In terms of biological role, choline/H+ antiporter. This is Choline transporter-like protein 5-A (slc44a5a) from Danio rerio (Zebrafish).